Consider the following 498-residue polypeptide: Glycerol kinase (498 aa).

T12 is an ADP binding site. Positions 12, 13, and 14 each coordinate ATP. Residue T12 coordinates sn-glycerol 3-phosphate. R16 provides a ligand contact to ADP. Residues R82, E83, and Y134 each coordinate sn-glycerol 3-phosphate. The glycerol site is built by R82, E83, and Y134. H230 is subject to Phosphohistidine; by HPr. Sn-glycerol 3-phosphate is bound at residue D244. Residues D244 and Q245 each coordinate glycerol. The ADP site is built by T266 and G309. Positions 266, 309, 313, and 410 each coordinate ATP. The ADP site is built by G410 and N414.

Belongs to the FGGY kinase family. Homotetramer and homodimer (in equilibrium). The phosphoenolpyruvate-dependent sugar phosphotransferase system (PTS), including enzyme I, and histidine-containing protein (HPr) are required for the phosphorylation, which leads to the activation of the enzyme.

The catalysed reaction is glycerol + ATP = sn-glycerol 3-phosphate + ADP + H(+). It participates in polyol metabolism; glycerol degradation via glycerol kinase pathway; sn-glycerol 3-phosphate from glycerol: step 1/1. Its activity is regulated as follows. Activated by phosphorylation and inhibited by fructose 1,6-bisphosphate (FBP). Functionally, key enzyme in the regulation of glycerol uptake and metabolism. Catalyzes the phosphorylation of glycerol to yield sn-glycerol 3-phosphate. The polypeptide is Glycerol kinase (Staphylococcus aureus (strain Mu50 / ATCC 700699)).